The chain runs to 367 residues: Ribosomal RNA large subunit methyltransferase M (367 aa).

S-adenosyl-L-methionine-binding positions include S188, 221–224, D240, D260, and D277; that span reads CPGG. K306 (proton acceptor) is an active-site residue.

Belongs to the class I-like SAM-binding methyltransferase superfamily. RNA methyltransferase RlmE family. RlmM subfamily. As to quaternary structure, monomer.

Its subcellular location is the cytoplasm. It carries out the reaction cytidine(2498) in 23S rRNA + S-adenosyl-L-methionine = 2'-O-methylcytidine(2498) in 23S rRNA + S-adenosyl-L-homocysteine + H(+). Its function is as follows. Catalyzes the 2'-O-methylation at nucleotide C2498 in 23S rRNA. The protein is Ribosomal RNA large subunit methyltransferase M of Serratia proteamaculans (strain 568).